Here is a 211-residue protein sequence, read N- to C-terminus: ATP phosphoribosyltransferase (211 aa).

The protein belongs to the ATP phosphoribosyltransferase family. Short subfamily. As to quaternary structure, heteromultimer composed of HisG and HisZ subunits.

The protein resides in the cytoplasm. The enzyme catalyses 1-(5-phospho-beta-D-ribosyl)-ATP + diphosphate = 5-phospho-alpha-D-ribose 1-diphosphate + ATP. The protein operates within amino-acid biosynthesis; L-histidine biosynthesis; L-histidine from 5-phospho-alpha-D-ribose 1-diphosphate: step 1/9. Catalyzes the condensation of ATP and 5-phosphoribose 1-diphosphate to form N'-(5'-phosphoribosyl)-ATP (PR-ATP). Has a crucial role in the pathway because the rate of histidine biosynthesis seems to be controlled primarily by regulation of HisG enzymatic activity. This is ATP phosphoribosyltransferase from Thermosynechococcus vestitus (strain NIES-2133 / IAM M-273 / BP-1).